The chain runs to 1005 residues: PH and SEC7 domain-containing protein 4 (1005 aa).

Positions 27 to 66 (YPSEIHGHPGPSEPCQEHTCPFDPPESARPDAPHGNSGVE) are disordered. 3 positions are modified to phosphoserine: serine 85, serine 88, and serine 97. Disordered regions lie at residues 145–189 (PSKD…PGSS), 287–386 (LALG…NRGE), 407–525 (TSLL…SSSR), and 694–714 (EEDADRPEKDQPSPSAGKISS). Positions 161 to 177 (EEDEDSGDDSSGPEEEN) are enriched in acidic residues. Over residues 350 to 361 (SQTSQSLSDLTQ) the composition is skewed to low complexity. 2 positions are modified to phosphoserine: serine 381 and serine 435. A compositionally biased stretch (low complexity) spans 428–438 (PVSSQDSSPRV). 2 stretches are compositionally biased toward basic and acidic residues: residues 453 to 465 (LQKDRSELSSLKE) and 476 to 488 (QEAECEDTSRSED). In terms of domain architecture, SEC7 spans 493–686 (QHHVHLASAE…KALYWSIRSE (194 aa)). The region spanning 726 to 841 (PTYKQGILAR…WIARINLAAA (116 aa)) is the PH domain. Residues 870–926 (SSLEEQHRSHENCLDAASDDLLDLQRNLPERRGRSRELEEYRLRKEYLEHEKTRYET) are a coiled coil. The tract at residues 951 to 1005 (KETDGSQEPRPSLKKSHSSPSLHQEEAPTTAKVKRNISERRTYRKIIPKRNRNQL) is disordered. 2 positions are modified to phosphoserine: serine 968 and serine 971. Positions 992–1005 (TYRKIIPKRNRNQL) are enriched in basic residues.

Its subcellular location is the cell membrane. It localises to the cell projection. The protein localises to the ruffle membrane. Its function is as follows. Guanine nucleotide exchange factor for ARF6 and ARL14/ARF7. Through ARL14 activation, controls the movement of MHC class II-containing vesicles along the actin cytoskeleton in dendritic cells. Involved in membrane recycling. Interacts with several phosphatidylinositol phosphate species, including phosphatidylinositol 3,4-bisphosphate, phosphatidylinositol 3,5-bisphosphate and phosphatidylinositol 4,5-bisphosphate. This is PH and SEC7 domain-containing protein 4 (Psd4) from Mus musculus (Mouse).